Reading from the N-terminus, the 613-residue chain is MAAVEAAAEPVTVVAAVGPKAKDEEEEEEEPLPPCEAVRWAPVGAVAEARPGATAFLEEATAEEPGAAPGSPPDSPGRTLRRLRAERRRLDSALLALSSHFAQVQFRLRQVVRGAPAEQQRLLRELEDFAFRGCPHVLGYEGPGDPASDEGDGLPGDRPWLRGEDQSEQEKQERLETQREKQKELILQLKTQLDDLETFAYQEGSYDSLPQSVVLERQRVIIDELIKKLDMNLNEDISSLSTEELRQRVDAAVAQIVNPARVKEQLVEQLKTQIRDLEMFINFIQDEVGSPLQTGGGHCECKAGGKTGNGCSRTGSSRTPPGNSKTKAEDVKKVRETGLHLMRRALAVLQIFAVSQFGCATGQIPPTLWQRVQADRDYSPLLKRLEVSVDRVKQLALRQQPHDHVITSANLQDLSLGGKDELTMAVRKELTVAVRDLLAHGLYASSPGMSLVMAPIACLLPAFSSAPEAMHPWELFVKYYHAKNGRAYVESPARKLSQSFALPVTGGTVVTPKQSLLTAIHMVLTEHDPFKRSADSELKALVCMALNEQRLVSWVNLICKSGSLIEPHYQPWSYMAHTGFESALNLLSRLSSLKFSLPVDLAVRQLKNIKDAF.

Positions alanine 15–glutamate 36 are disordered. A Phosphothreonine modification is found at threonine 54. The segment covering leucine 57–proline 69 has biased composition (low complexity). Disordered regions lie at residues leucine 57–threonine 79, tyrosine 140–threonine 177, and glycine 305–aspartate 330. 2 positions are modified to phosphoserine: serine 71 and serine 75. Residues proline 159–threonine 177 show a composition bias toward basic and acidic residues. Residues tryptophan 160 to glutamate 235 are a coiled coil. Residues asparagine 309–lysine 325 show a composition bias toward polar residues. An RUN domain is found at glutamate 421–alanine 602. Serine 497 is subject to Phosphoserine.

May play a role as p53/TP53 inhibitor and thus may have oncogenic activity. This is RUN domain-containing protein 1 (RUNDC1) from Homo sapiens (Human).